We begin with the raw amino-acid sequence, 95 residues long: Cerebratulus toxin A-III (95 aa).

3 disulfide bridges follow: Cys17-Cys38, Cys23-Cys34, and Cys48-Cys61.

The protein belongs to the worm cytolysin family.

The protein resides in the secreted. Functionally, permeabilizes a variety of cells. Forms large pores which allows the release of large proteins almost as rapidly as small organic molecules and inorganic ions. At sublytic concentrations, the toxin also inhibits protein kinase C and endogenous voltage-gated cation selective (sodium, calcium) channels occurring in the nervous and cardiovascular systems. In Cerebratulus lacteus (Milky ribbon worm), this protein is Cerebratulus toxin A-III.